Here is a 404-residue protein sequence, read N- to C-terminus: Cytoplasmic 60S subunit biogenesis factor REI1 homolog 1 (404 aa).

2 consecutive C2H2-type zinc fingers follow at residues 4 to 28 (LTCN…SDWH) and 68 to 92 (YTCA…SRSH). Residues 119–169 (QHRGSIDDDSEDEWVEVDSDEELAAEEASDSLSKLNVNESGSAEDMDDDGD) are disordered. Acidic residues-rich tracts occupy residues 125-147 (DDDS…EEAS) and 160-169 (SAEDMDDDGD). 2 C2H2-type zinc fingers span residues 178-201 (TCCL…HKHH) and 229-256 (FMCL…AKSH).

The protein belongs to the REI1 family. In terms of assembly, can form homodimer. Interacts with RLP24, RPL24A, RPL24B, EBP1 and JJJ1.

Its subcellular location is the cytoplasm. In terms of biological role, pre-60S-associated factor involved in the cytoplasmic maturation of the 60S subunit. Involved in the dissociation and recycling of other late pre-60S factors before newly synthesized large ribosomal subunits enter translation. Can complement the growth defect of a yeast mutant lacking REI1. Required for leaf growth under cold temperature conditions. This Arabidopsis thaliana (Mouse-ear cress) protein is Cytoplasmic 60S subunit biogenesis factor REI1 homolog 1.